A 347-amino-acid polypeptide reads, in one-letter code: Transcription factor JunB (347 aa).

Glycyl lysine isopeptide (Lys-Gly) (interchain with G-Cter in SUMO2) cross-links involve residues Lys-4, Lys-33, and Lys-36. The segment at 50 to 77 is disordered; that stretch reads LKAPGARGPGPEGNGGGSYFSSQGSDTG. The span at 56 to 67 shows a compositional bias: gly residues; that stretch reads RGPGPEGNGGGS. Over residues 68–77 the composition is skewed to polar residues; that stretch reads YFSSQGSDTG. Lys-81 participates in a covalent cross-link: Glycyl lysine isopeptide (Lys-Gly) (interchain with G-Cter in SUMO2). Phosphothreonine occurs at positions 102 and 104. Ser-117 carries the post-translational modification Phosphoserine. A Glycyl lysine isopeptide (Lys-Gly) (interchain with G-Cter in SUMO2) cross-link involves residue Lys-141. Lys-240 is modified (N6-acetyllysine; alternate). Lys-240 participates in a covalent cross-link: Glycyl lysine isopeptide (Lys-Gly) (interchain with G-Cter in SUMO1); alternate. A Glycyl lysine isopeptide (Lys-Gly) (interchain with G-Cter in SUMO2); alternate cross-link involves residue Lys-240. The segment covering 241-253 has biased composition (basic and acidic residues); that stretch reads EEPQTVPEARSRD. Positions 241-260 are disordered; sequence EEPQTVPEARSRDATPPVSP. At Ser-251 the chain carries Phosphoserine. Position 255 is a phosphothreonine (Thr-255). Position 259 is a phosphoserine (Ser-259). The segment at 268–295 is basic motif; it reads RIKVERKRLRNRLAATKCRKRKLERIAR. The 64-residue stretch at 268 to 331 folds into the bZIP domain; sequence RIKVERKRLR…AQLKQKVMTH (64 aa). A leucine-zipper region spans residues 296-324; sequence LEDKVKTLKAENAGLSSTAGLLREQVAQL. A Glycyl lysine isopeptide (Lys-Gly) (interchain with G-Cter in SUMO2) cross-link involves residue Lys-343.

It belongs to the bZIP family. Jun subfamily. As to quaternary structure, binds DNA as a homodimer or as a heterodimer with another member of the Jun/Fos family. Component of an AP-1 transcription factor complex composed of JUN-FOS heterodimers. As part of the AP-1 transcription factor complex, forms heterodimers with FOSB, thereby binding to the AP-1 consensus sequence and stimulating transcription. Interacts with ITCH (via its WW domains). Post-translationally, ubiquitinated by ITCH, leading to its degradation.

It localises to the nucleus. Its function is as follows. Transcription factor involved in regulating gene activity following the primary growth factor response. Binds to the DNA sequence 5'-TGA[GC]TCA-3'. Heterodimerizes with proteins of the FOS family to form an AP-1 transcription complex, thereby enhancing its DNA binding activity to an AP-1 consensus sequence and its transcriptional activity. In Bos taurus (Bovine), this protein is Transcription factor JunB (JUNB).